A 405-amino-acid polypeptide reads, in one-letter code: Tyrosine--tRNA ligase (405 aa).

The short motif at 41 to 50 is the 'HIGH' region element; it reads PTAPDLHLGH. The 'KMSKS' region signature appears at 225–229; sequence KMSKS. ATP is bound at residue lysine 228. Positions 342-404 constitute an S4 RNA-binding domain; the sequence is EPLLVWVLSK…GKKGKFLKII (63 aa).

The protein belongs to the class-I aminoacyl-tRNA synthetase family. TyrS type 2 subfamily. In terms of assembly, homodimer.

The protein localises to the cytoplasm. The enzyme catalyses tRNA(Tyr) + L-tyrosine + ATP = L-tyrosyl-tRNA(Tyr) + AMP + diphosphate + H(+). Its function is as follows. Catalyzes the attachment of tyrosine to tRNA(Tyr) in a two-step reaction: tyrosine is first activated by ATP to form Tyr-AMP and then transferred to the acceptor end of tRNA(Tyr). In Leptospira interrogans serogroup Icterohaemorrhagiae serovar Lai (strain 56601), this protein is Tyrosine--tRNA ligase.